We begin with the raw amino-acid sequence, 138 residues long: Cysteine desulfuration protein SufE (138 aa).

The active-site Cysteine persulfide intermediate is the Cys-51.

It belongs to the SufE family. As to quaternary structure, homodimer. Interacts with SufS.

The protein resides in the cytoplasm. The protein operates within cofactor biosynthesis; iron-sulfur cluster biosynthesis. In terms of biological role, participates in cysteine desulfuration mediated by SufS. Cysteine desulfuration mobilizes sulfur from L-cysteine to yield L-alanine and constitutes an essential step in sulfur metabolism for biosynthesis of a variety of sulfur-containing biomolecules. Functions as a sulfur acceptor for SufS, by mediating the direct transfer of the sulfur atom from the S-sulfanylcysteine of SufS, an intermediate product of cysteine desulfuration process. This is Cysteine desulfuration protein SufE from Escherichia fergusonii (strain ATCC 35469 / DSM 13698 / CCUG 18766 / IAM 14443 / JCM 21226 / LMG 7866 / NBRC 102419 / NCTC 12128 / CDC 0568-73).